The primary structure comprises 359 residues: Archaemetzincin-2 (359 aa).

His254 lines the Zn(2+) pocket. Glu255 functions as the Proton acceptor in the catalytic mechanism. 6 residues coordinate Zn(2+): His258, His264, Cys265, Cys270, Cys289, and Cys292.

It belongs to the peptidase M54 family. Zn(2+) is required as a cofactor. In terms of tissue distribution, predominantly expressed in testis.

In terms of biological role, probable zinc metalloprotease. In Mus musculus (Mouse), this protein is Archaemetzincin-2 (Amz2).